The chain runs to 94 residues: Small ribosomal subunit protein uS17 (94 aa).

It belongs to the universal ribosomal protein uS17 family. Part of the 30S ribosomal subunit.

One of the primary rRNA binding proteins, it binds specifically to the 5'-end of 16S ribosomal RNA. This Symbiobacterium thermophilum (strain DSM 24528 / JCM 14929 / IAM 14863 / T) protein is Small ribosomal subunit protein uS17.